The primary structure comprises 246 residues: 3-deoxy-manno-octulosonate cytidylyltransferase (246 aa).

This sequence belongs to the KdsB family.

It is found in the cytoplasm. The enzyme catalyses 3-deoxy-alpha-D-manno-oct-2-ulosonate + CTP = CMP-3-deoxy-beta-D-manno-octulosonate + diphosphate. It functions in the pathway nucleotide-sugar biosynthesis; CMP-3-deoxy-D-manno-octulosonate biosynthesis; CMP-3-deoxy-D-manno-octulosonate from 3-deoxy-D-manno-octulosonate and CTP: step 1/1. It participates in bacterial outer membrane biogenesis; lipopolysaccharide biosynthesis. Functionally, activates KDO (a required 8-carbon sugar) for incorporation into bacterial lipopolysaccharide in Gram-negative bacteria. This chain is 3-deoxy-manno-octulosonate cytidylyltransferase, found in Chloroherpeton thalassium (strain ATCC 35110 / GB-78).